A 161-amino-acid chain; its full sequence is Urease accessory protein UreE (161 aa).

Positions 138–161 (RGAYHAHGGHSHDHGQGHHHHDHG) are disordered.

Belongs to the UreE family.

It is found in the cytoplasm. Functionally, involved in urease metallocenter assembly. Binds nickel. Probably functions as a nickel donor during metallocenter assembly. This is Urease accessory protein UreE from Agrobacterium fabrum (strain C58 / ATCC 33970) (Agrobacterium tumefaciens (strain C58)).